A 2939-amino-acid chain; its full sequence is Serine/threonine-protein kinase tel1 (2939 aa).

Disordered regions lie at residues glycine 193 to serine 212, proline 695 to serine 718, and lysine 859 to lysine 886. Basic and acidic residues predominate over residues glutamate 697–alanine 715. Positions isoleucine 1869–alanine 2471 constitute an FAT domain. Positions phenylalanine 2577 to glutamate 2890 constitute a PI3K/PI4K catalytic domain. A G-loop region spans residues isoleucine 2583–alanine 2589. A catalytic loop region spans residues glycine 2755 to asparagine 2763. The tract at residues histidine 2775–threonine 2799 is activation loop. Residues aspartate 2869–alanine 2894 form a disordered region. The segment covering aspartate 2875–serine 2884 has biased composition (basic and acidic residues). Positions lysine 2907–alanine 2939 constitute an FATC domain.

This sequence belongs to the PI3/PI4-kinase family. ATM subfamily. In terms of assembly, associates with DNA double-strand breaks.

Its subcellular location is the nucleus. It is found in the chromosome. It localises to the telomere. It carries out the reaction L-seryl-[protein] + ATP = O-phospho-L-seryl-[protein] + ADP + H(+). It catalyses the reaction L-threonyl-[protein] + ATP = O-phospho-L-threonyl-[protein] + ADP + H(+). Its function is as follows. Serine/threonine protein kinase which activates checkpoint signaling upon genotoxic stresses such as ionizing radiation (IR), ultraviolet light (UV), or DNA replication stalling, thereby acting as a DNA damage sensor. Recognizes the substrate consensus sequence [ST]-Q. Phosphorylates histone H2A to form H2AS128ph (gamma-H2A) at sites of DNA damage, involved in the regulation of DNA damage response mechanism. Required for the control of telomere length and genome stability. The protein is Serine/threonine-protein kinase tel1 (mus-21) of Neurospora crassa (strain ATCC 24698 / 74-OR23-1A / CBS 708.71 / DSM 1257 / FGSC 987).